We begin with the raw amino-acid sequence, 154 residues long: Egg-lysin (154 aa).

Residues 1–18 form the signal peptide; the sequence is MKLLVLWVFAMMATVAMS.

As to quaternary structure, monomer. Homodimer. Molecules associate into dimers and then rapidly dissociate again. Interacts (as a monomer) with the egg vitelline layer protein VERL (via VERL repeats); each VERL chain can bind multiple copies of lysin. As to expression, sperm.

It localises to the cytoplasmic vesicle. The protein localises to the secretory vesicle. The protein resides in the acrosome lumen. Creates a 3 um hole in the egg vitelline layer through which the sperm passes. Does not have enzyme activity. Species-specific interaction between the sperm protein lysin and the egg protein VERL exposes a basic surface on lysin that may dissociate the egg vitelline layer via electrostatic repulsion. Plays a role in ensuring species-specific fertilization. The polypeptide is Egg-lysin (Haliotis fulgens (Green abalone)).